The following is a 354-amino-acid chain: Methylthioribose-1-phosphate isomerase (354 aa).

Substrate contacts are provided by residues 58 to 60, Arg-101, and Gln-204; that span reads RGA. The active-site Proton donor is Asp-245. 255-256 provides a ligand contact to substrate; it reads NK.

Belongs to the eIF-2B alpha/beta/delta subunits family. MtnA subfamily.

The catalysed reaction is 5-(methylsulfanyl)-alpha-D-ribose 1-phosphate = 5-(methylsulfanyl)-D-ribulose 1-phosphate. It participates in amino-acid biosynthesis; L-methionine biosynthesis via salvage pathway; L-methionine from S-methyl-5-thio-alpha-D-ribose 1-phosphate: step 1/6. Catalyzes the interconversion of methylthioribose-1-phosphate (MTR-1-P) into methylthioribulose-1-phosphate (MTRu-1-P). This chain is Methylthioribose-1-phosphate isomerase, found in Xylella fastidiosa (strain M23).